Consider the following 134-residue polypeptide: Profilin-1 (134 aa).

C13 and C118 form a disulfide bridge. The short motif at 84-100 (AVIRGKKGSGGITTKKT) is the Involved in PIP2 interaction element. Position 114 is a phosphothreonine (T114).

Belongs to the profilin family. Occurs in many kinds of cells as a complex with monomeric actin in a 1:1 ratio. In terms of processing, phosphorylated by MAP kinases.

The protein localises to the cytoplasm. It is found in the cytoskeleton. Its function is as follows. Binds to actin and affects the structure of the cytoskeleton. At high concentrations, profilin prevents the polymerization of actin, whereas it enhances it at low concentrations. The chain is Profilin-1 from Olea europaea (Common olive).